Here is a 240-residue protein sequence, read N- to C-terminus: Large ribosomal subunit protein uL3 (240 aa).

Disordered regions lie at residues 138 to 158 (SISH…KTFK) and 215 to 240 (EAPL…SAEG). N5-methylglutamine is present on Gln-151.

This sequence belongs to the universal ribosomal protein uL3 family. As to quaternary structure, part of the 50S ribosomal subunit. Forms a cluster with proteins L14 and L19. Post-translationally, methylated by PrmB.

One of the primary rRNA binding proteins, it binds directly near the 3'-end of the 23S rRNA, where it nucleates assembly of the 50S subunit. This is Large ribosomal subunit protein uL3 from Beijerinckia indica subsp. indica (strain ATCC 9039 / DSM 1715 / NCIMB 8712).